The chain runs to 395 residues: FAD-dependent monooxygenase cctM (395 aa).

The N-terminal stretch at 1-23 (MEPGTDVRRVLVIGAGAAGLLIA) is a signal peptide. Positions 37, 52, and 112 each coordinate FAD. N-linked (GlcNAc...) asparagine glycans are attached at residues Asn-138 and Asn-298. FAD is bound at residue Asp-306.

This sequence belongs to the paxM FAD-dependent monooxygenase family. It depends on FAD as a cofactor.

It functions in the pathway mycotoxin biosynthesis. Functionally, FAD-dependent monooxygenase; part of the gene cluster that mediates the biosynthesis of the mycotoxin cyclochlorotine, a hepatotoxic and carcinogenic cyclic chlorinated pentapeptide. The function of cctM within the pathway, if any, remains undetermined. The NRPS cctN initially catalyzes the condensation of L-serine (Ser), Pro, L-2-aminobutyrate (2Abu), Ser, and beta-Phe in this order to produce isocyclotine. After the dichlorination of Pro2 catalyzed by cctP2 to produce isocyclochlorotine, the cctO-mediated transacylation of isocyclochlorotine can furnish cyclochlorotine. The subsequent hydroxylation of cyclochlorotine by cctR yields hydroxycyclochlorotine as the final product. CctP1 probably acts as a phenylalanine aminomutase and provides the uncommon building block beta-Phe. Furthermore, 2Abu can be synthesized from threonine by one of the threonine dehydratases and transaminases localized outside of the cluster. The functions of the remaining proteins encoded by the cluster, cctM and cctT, have not been identified yet. This is FAD-dependent monooxygenase cctM from Talaromyces islandicus (Penicillium islandicum).